We begin with the raw amino-acid sequence, 622 residues long: Low affinity potassium transport system protein Kup (622 aa).

Helical transmembrane passes span 9–29 (LPAITLAAIGVVYGDIGTSPL), 49–69 (VFGFLSLIFWLLIFVVSIKYL), 103–123 (VIMGLIGGSFFYGEVVITPAI), 137–157 (PQLDTWIVPLSIIVLTLLFMI), 165–185 (VGKLFAPIMLTWFLILAGLGL), 213–233 (VSFIALGAVVLSITGGEALYA), 247–267 (WFTVVLPSLTLNYFGQGALLL), 276–296 (PFFLLAPDWALIPLLIIAALA), 337–357 (IYIPFVNWMLYVAVVIVIVSF), 363–383 (LAAAYGIAVTGTMVLTSILST), 396–416 (FVALILIAFLCVDIPLFTANL), and 419–439 (LLSGGWLPLSLGTVMFIVMTT).

The protein belongs to the HAK/KUP transporter (TC 2.A.72) family.

Its subcellular location is the cell inner membrane. It carries out the reaction K(+)(in) + H(+)(in) = K(+)(out) + H(+)(out). Responsible for the low-affinity transport of potassium into the cell. Likely operates as a K(+):H(+) symporter. This Escherichia coli O157:H7 (strain EC4115 / EHEC) protein is Low affinity potassium transport system protein Kup.